Here is a 90-residue protein sequence, read N- to C-terminus: Accessory gland-specific peptide 26Ab (90 aa).

An N-terminal signal peptide occupies residues 1 to 21 (MNYFAVLCIFSCICFWQFSDA).

As to expression, main cells of the accessory glands of males.

It is found in the secreted. The protein resides in the extracellular space. This protein is transferred from male to female during mating and may affect egglaying and behavior after mating. The protein is Accessory gland-specific peptide 26Ab (Acp26Ab) of Drosophila simulans (Fruit fly).